Here is a 626-residue protein sequence, read N- to C-terminus: MMTASVAGNRSGRSGNIARERSNRSRGAQKSDKERNLSKGSSRPKSNSSRVKKMRKSSLSKVQKNFAVFNDSAEHENKYETLAVAEADEKEVILLDEEEDTAMTTETKGVHAEETANVTGAEGVNAAANALDDNQDFIGFSDSEEEVASGEENGDADYAVEDAEDESSEPLPTNADYPWIQNHDHSRQREIADWLTLEIKDFVSYISPNKTEIQLRNDALKRIRDAVQDFWPDANLHCFGSYATDLYLPGSDIDCVVNSKSGDKDNKNALYSLASYLKRNGLATQVSVIAKARVPIIKFVEPASQIHIDLSFERTNGVEAAKIIRGWLHDTPGLRELVLIVKQFLHARRLNDVHIGGLGGFSIICLAYSFLKLHPRIICRDIEPLQNLGVLLIDFFELYGKNFGYDDVGIAVSEGDASYINKKEYPELTRNLRGTFNLVIQDPGDPANNISRGSFNIRDIKKAFAGAFELLTNRCFELDAATFKHRVGKSILGNVIKYRGAKRDFKDERALIVNKAIQENEEFHQRRGRIVHRDTAEFINISDDDDYELQPPPKRARVPAPAPAPADNVVVLDDPADDYVPAQPVDKLMGLDDTDDYLPAPASPTDTPKLDKAAKRNYWLSKGQTM.

Polar residues predominate over residues 1-14 (MMTASVAGNRSGRS). Residues 1 to 62 (MMTASVAGNR…KMRKSSLSKV (62 aa)) form a disordered region. Basic and acidic residues predominate over residues 18 to 37 (ARERSNRSRGAQKSDKERNL). Residues 38 to 49 (SKGSSRPKSNSS) are compositionally biased toward low complexity. Positions 252 and 254 each coordinate Mg(2+). Residues Gly-317, Lys-342, Asn-448, and Arg-452 each contribute to the ATP site. In terms of domain architecture, PAP-associated spans 387-448 (NLGVLLIDFF…VIQDPGDPAN (62 aa)). The interval 590–626 (GLDDTDDYLPAPASPTDTPKLDKAAKRNYWLSKGQTM) is disordered.

Belongs to the DNA polymerase type-B-like family. As to quaternary structure, component of the TRAMP5 complex. The cofactor is Mg(2+). Requires Mn(2+) as cofactor.

The protein resides in the nucleus. Its subcellular location is the nucleolus. The catalysed reaction is RNA(n) + ATP = RNA(n)-3'-adenine ribonucleotide + diphosphate. Functionally, catalytic subunit of the TRAMP5 complex which has a poly(A) RNA polymerase activity and is involved in a post-transcriptional quality control mechanism limiting inappropriate expression of genetic information. Polyadenylation is required for the degradative activity of the exosome on several of its nuclear RNA substrates like cryptic transcripts generated by RNA polymerase II and III, or hypomethylated pre-tRNAi-Met. Polyadenylates RNA processing and degradation intermediates of snRNAs, snoRNAs and mRNAs that accumulate in strains lacking a functional exosome. TRF5 is also required for proper nuclear division in mitosis and sister chromatid cohesion. Involved in the regulation of histone mRNA levels. May mediate mitotic chromosome condensation. The polypeptide is Poly(A) RNA polymerase protein 1 (TRF5) (Eremothecium gossypii (strain ATCC 10895 / CBS 109.51 / FGSC 9923 / NRRL Y-1056) (Yeast)).